We begin with the raw amino-acid sequence, 185 residues long: Ribosome-recycling factor (185 aa).

It belongs to the RRF family.

The protein resides in the cytoplasm. Its function is as follows. Responsible for the release of ribosomes from messenger RNA at the termination of protein biosynthesis. May increase the efficiency of translation by recycling ribosomes from one round of translation to another. The chain is Ribosome-recycling factor from Streptococcus equi subsp. equi (strain 4047).